The primary structure comprises 142 residues: Large ribosomal subunit protein uL11 (142 aa).

It belongs to the universal ribosomal protein uL11 family. As to quaternary structure, part of the ribosomal stalk of the 50S ribosomal subunit. Interacts with L10 and the large rRNA to form the base of the stalk. L10 forms an elongated spine to which L12 dimers bind in a sequential fashion forming a multimeric L10(L12)X complex. In terms of processing, one or more lysine residues are methylated.

Its function is as follows. Forms part of the ribosomal stalk which helps the ribosome interact with GTP-bound translation factors. The sequence is that of Large ribosomal subunit protein uL11 from Bartonella tribocorum (strain CIP 105476 / IBS 506).